The primary structure comprises 127 residues: Large ribosomal subunit protein bL20 (127 aa).

It belongs to the bacterial ribosomal protein bL20 family.

In terms of biological role, binds directly to 23S ribosomal RNA and is necessary for the in vitro assembly process of the 50S ribosomal subunit. It is not involved in the protein synthesizing functions of that subunit. The protein is Large ribosomal subunit protein bL20 of Renibacterium salmoninarum (strain ATCC 33209 / DSM 20767 / JCM 11484 / NBRC 15589 / NCIMB 2235).